The primary structure comprises 356 residues: Adenine deaminase (356 aa).

H23, H25, and H211 together coordinate Zn(2+). E214 functions as the Proton donor in the catalytic mechanism. D292 provides a ligand contact to Zn(2+). D293 contacts substrate.

This sequence belongs to the metallo-dependent hydrolases superfamily. Adenosine and AMP deaminases family. Adenine deaminase type 2 subfamily. Zn(2+) serves as cofactor.

The protein localises to the cytoplasm. Its subcellular location is the nucleus. It carries out the reaction adenine + H2O + H(+) = hypoxanthine + NH4(+). Catalyzes the hydrolytic deamination of adenine to hypoxanthine. Plays an important role in the purine salvage pathway and in nitrogen catabolism. This chain is Adenine deaminase, found in Candida albicans (strain SC5314 / ATCC MYA-2876) (Yeast).